The primary structure comprises 225 residues: Thymocyte nuclear protein 1 (225 aa).

Residues 1 to 47 (MSRPRKRLAGTSGSDKGLSGKRTKTENSGEALAKVEDSNPQKTSATK) are disordered. Residues 5 to 10 (RKRLAG) carry the Nuclear localization signal motif. A compositionally biased stretch (basic and acidic residues) spans 23–39 (TKTENSGEALAKVEDSN).

In terms of processing, phosphorylated.

It localises to the nucleus. In terms of biological role, specifically binds 5-hydroxymethylcytosine (5hmC), suggesting that it acts as a specific reader of 5hmC. The sequence is that of Thymocyte nuclear protein 1 (THYN1) from Homo sapiens (Human).